Reading from the N-terminus, the 356-residue chain is MRVTDFSFELPESLIAHYPMPERSSCRLLSLDGPTGALTHGTFTDLLDKLNPGDLLVFNNTRVIPARLFGRKASGGKIEVLVERMLDDKRILAHIRASKAPKPGAELLLGDDESINATMTARHGALFEVEFNDDRSVLDILNSIGHMPLPPYIDRPDEDADRELYQTVYSEKPGAVAAPTAGLHFDEPLLEKLRAKGVEMAFVTLHVGAGTFQPVRVDTIEDHIMHSEYAEVPQDVVDAVLATKARGNRVIAVGTTSVRSLESAAQAAKNDLIEPFFDDTQIFIYPGFQYKVVDALVTNFHLPESTLIMLVSAFAGYQHTMNAYKAAVEEKYRFFSYGDAMFITYNPQAINERVGE.

The protein belongs to the QueA family. In terms of assembly, monomer.

The protein resides in the cytoplasm. It carries out the reaction 7-aminomethyl-7-carbaguanosine(34) in tRNA + S-adenosyl-L-methionine = epoxyqueuosine(34) in tRNA + adenine + L-methionine + 2 H(+). Its pathway is tRNA modification; tRNA-queuosine biosynthesis. In terms of biological role, transfers and isomerizes the ribose moiety from AdoMet to the 7-aminomethyl group of 7-deazaguanine (preQ1-tRNA) to give epoxyqueuosine (oQ-tRNA). This chain is S-adenosylmethionine:tRNA ribosyltransferase-isomerase, found in Escherichia fergusonii (strain ATCC 35469 / DSM 13698 / CCUG 18766 / IAM 14443 / JCM 21226 / LMG 7866 / NBRC 102419 / NCTC 12128 / CDC 0568-73).